Reading from the N-terminus, the 106-residue chain is Putative double-stranded DNA mimic protein VIBHAR_02752 (106 aa).

The protein belongs to the putative dsDNA mimic protein family.

In terms of biological role, may act as a double-stranded DNA (dsDNA) mimic. Probably regulates the activity of a dsDNA-binding protein. The chain is Putative double-stranded DNA mimic protein VIBHAR_02752 from Vibrio campbellii (strain ATCC BAA-1116).